A 359-amino-acid polypeptide reads, in one-letter code: WW domain-binding protein wbp-11 (359 aa).

Disordered regions lie at residues 1-38, 235-264, and 317-341; these read MPSI…DRQQ, PSSY…NPMG, and PGDN…QKQA. Positions 8–27 are enriched in basic and acidic residues; it reads KSGERYRAPTDQARKMDRKK. Residues 245–256 are compositionally biased toward basic residues; it reads MPHHHHHHHPHA.

In terms of biological role, activates pre-mRNA splicing. May inhibit PP1 phosphatase activity. In Caenorhabditis elegans, this protein is WW domain-binding protein wbp-11.